Here is a 697-residue protein sequence, read N- to C-terminus: Colicin-D (697 aa).

Positions 17–24 (HSMVVWPS) match the TonB box motif.

It belongs to the cloacin colicin family.

In terms of biological role, colicins are polypeptide toxins produced by and active against E.coli and closely related bacteria. Colicin D inhibits protein synthesis. This chain is Colicin-D (cda), found in Escherichia coli.